Consider the following 359-residue polypeptide: Magnesium transporter NIPA2 (359 aa).

Residues 1–9 (MSLGRGKYD) lie on the Extracellular side of the membrane. Residues 10-30 (FYIGLGLAMTSSIFIGGSFIL) form a helical membrane-spanning segment. Residues 31 to 56 (KKKGLLRLARKGSMRAGQGGHAYLKE) are Cytoplasmic-facing. Residues 57–77 (WLWWAGLLSMGAGEVANFAAY) traverse the membrane as a helical segment. A topological domain (extracellular) is located at residue A78. A helical transmembrane segment spans residues 79-99 (FAPATLVTPLGALSVLVSAIL). Topologically, residues 100-107 (SSYFLNER) are cytoplasmic. The helical transmembrane segment at 108 to 128 (LNLHGKIGCLLSILGSTVMVI) threads the bilayer. Residues 129–149 (HAPKEEEIETLNEMSHKLGDP) are Extracellular-facing. Residues 150–170 (GFVVFATFVVIVALIFIFVVG) form a helical membrane-spanning segment. Residues 171–175 (PRHGQ) lie on the Cytoplasmic side of the membrane. Residues 176-196 (TNILVYITICSVIGAFSVSCV) form a helical membrane-spanning segment. The Extracellular portion of the chain corresponds to 197–215 (KGLGIAIKELLAGKPVLQH). Residues 216–236 (PLAWILLFSLVVCVSTQINYL) form a helical membrane-spanning segment. Topologically, residues 237 to 246 (NRALDIFNTS) are cytoplasmic. Residues 247–267 (IVTPIYYVFFTTSVLTCSAIL) form a helical membrane-spanning segment. Topologically, residues 268 to 278 (FKEWQDMPVDD) are extracellular. A helical membrane pass occupies residues 279 to 299 (VIGTLSGFFTIIVGIFLLHAF). Topologically, residues 300–359 (KDVSFSLASLPVSFRKDEKAMNGNLSSMYEVLNNNEDDLPCGIEHTGENISRRNGNLPSF) are cytoplasmic.

It belongs to the NIPA family. Widely expressed. Expressed at high levels in the kidney.

It is found in the cell membrane. Its subcellular location is the early endosome. It carries out the reaction Mg(2+)(in) = Mg(2+)(out). In terms of biological role, acts as a selective Mg(2+) transporter. The protein is Magnesium transporter NIPA2 (Nipa2) of Mus musculus (Mouse).